Consider the following 595-residue polypeptide: UvrABC system protein C (595 aa).

The GIY-YIG domain occupies 17 to 94; sequence IEPGCYLMKD…IKQYQPRYNI (78 aa). In terms of domain architecture, UVR spans 199–234; that stretch reads KTILHNLEQKMQESSESLDFERAKEYRDLIQHIHNL.

The protein belongs to the UvrC family. In terms of assembly, interacts with UvrB in an incision complex.

The protein localises to the cytoplasm. In terms of biological role, the UvrABC repair system catalyzes the recognition and processing of DNA lesions. UvrC both incises the 5' and 3' sides of the lesion. The N-terminal half is responsible for the 3' incision and the C-terminal half is responsible for the 5' incision. In Staphylococcus saprophyticus subsp. saprophyticus (strain ATCC 15305 / DSM 20229 / NCIMB 8711 / NCTC 7292 / S-41), this protein is UvrABC system protein C.